The following is a 144-amino-acid chain: Superoxide dismutase [Mn], mitochondrial (144 aa).

Residues H10, H58, and D143 each coordinate Mn(2+).

It belongs to the iron/manganese superoxide dismutase family. In terms of assembly, homotetramer. Requires Mn(2+) as cofactor.

Its subcellular location is the mitochondrion matrix. The enzyme catalyses 2 superoxide + 2 H(+) = H2O2 + O2. Its function is as follows. Destroys superoxide anion radicals which are normally produced within the cells and which are toxic to biological systems. This Apostichopus californicus (California sea cucumber) protein is Superoxide dismutase [Mn], mitochondrial.